The primary structure comprises 346 residues: uncharacterized protein (346 aa).

This is an uncharacterized protein from Mycoplasma genitalium (strain ATCC 33530 / DSM 19775 / NCTC 10195 / G37) (Mycoplasmoides genitalium).